Consider the following 378-residue polypeptide: Protein FAM170B (378 aa).

Disordered stretches follow at residues 1–56 (MKHH…LPDD), 244–265 (TRDQ…DSSE), and 277–378 (QQQP…QQGK). Low complexity-rich tracts occupy residues 277–339 (QQQP…QPLQ) and 349–378 (PQKQ…QQGK).

It belongs to the FAM170 family. As to quaternary structure, interacts with GOPC. Exclusively expressed in adult testis (at protein level). Expression first started at postnatal week 3 in round spermatids, elongated spermatids and mature sperm.

It is found in the cytoplasmic vesicle. It localises to the secretory vesicle. The protein localises to the acrosome. Its subcellular location is the acrosome outer membrane. Plays a role in fertilization through the acrosome reaction. This chain is Protein FAM170B, found in Mus musculus (Mouse).